The following is a 228-amino-acid chain: ATP synthase subunit a (228 aa).

A run of 7 helical transmembrane segments spans residues 16–36 (GQEW…FIIA), 45–65 (LVPT…ISMG), 80–100 (LIGS…IPGF), 106–126 (NINF…YLGI), 138–158 (FMGP…ISHL), 178–198 (FLMV…FFLL), and 201–221 (FGVL…AGSI).

Belongs to the ATPase A chain family. F-type ATPases have 2 components, CF(1) - the catalytic core - and CF(0) - the membrane proton channel. CF(1) has five subunits: alpha(3), beta(3), gamma(1), delta(1), epsilon(1). CF(0) has three main subunits: a(1), b(2) and c(9-12). The alpha and beta chains form an alternating ring which encloses part of the gamma chain. CF(1) is attached to CF(0) by a central stalk formed by the gamma and epsilon chains, while a peripheral stalk is formed by the delta and b chains.

It localises to the cell inner membrane. Functionally, key component of the proton channel; it plays a direct role in the translocation of protons across the membrane. The polypeptide is ATP synthase subunit a (Aliarcobacter butzleri (strain RM4018) (Arcobacter butzleri)).